The primary structure comprises 726 residues: Eukaryotic translation initiation factor 3 subunit B (726 aa).

Residues 1–94 are sufficient for interaction with HCR1 and TIF32; the sequence is MSAALEDIKL…LFVECASPAD (94 aa). The segment at 1 to 219 is sufficient for interaction with PIC8; it reads MSAALEDIKL…GVVMWGGPHF (219 aa). In terms of domain architecture, RRM spans 37 to 120; the sequence is QYIVVCGAPV…HRLFIYTMRD (84 aa). WD repeat units lie at residues 142 to 182, 186 to 224, 235 to 283, 331 to 374, 442 to 485, 505 to 549, and 566 to 611; these read FPTS…EESV, RKNW…RLRR, VSPS…LQST, LKVP…MSCK, ELKD…FAPE, ITDK…TDKN, and NSFP…VKEE.

Belongs to the eIF-3 subunit B family. As to quaternary structure, component of the eukaryotic translation initiation factor 3 (eIF-3) complex.

The protein resides in the cytoplasm. Functionally, RNA-binding component of the eukaryotic translation initiation factor 3 (eIF-3) complex, which is involved in protein synthesis of a specialized repertoire of mRNAs and, together with other initiation factors, stimulates binding of mRNA and methionyl-tRNAi to the 40S ribosome. The eIF-3 complex specifically targets and initiates translation of a subset of mRNAs involved in cell proliferation. The sequence is that of Eukaryotic translation initiation factor 3 subunit B from Vanderwaltozyma polyspora (strain ATCC 22028 / DSM 70294 / BCRC 21397 / CBS 2163 / NBRC 10782 / NRRL Y-8283 / UCD 57-17) (Kluyveromyces polysporus).